A 112-amino-acid polypeptide reads, in one-letter code: Nitrogenase-stabilizing/protective protein NifW (112 aa).

The protein belongs to the NifW family. As to quaternary structure, homotrimer; associates with NifD.

Functionally, may protect the nitrogenase Fe-Mo protein from oxidative damage. This is Nitrogenase-stabilizing/protective protein NifW from Rhodopseudomonas palustris (strain BisA53).